The sequence spans 396 residues: DNA replication and repair protein RecF (396 aa).

30-37 (GANGSGKT) provides a ligand contact to ATP.

This sequence belongs to the RecF family.

The protein resides in the cytoplasm. In terms of biological role, the RecF protein is involved in DNA metabolism; it is required for DNA replication and normal SOS inducibility. RecF binds preferentially to single-stranded, linear DNA. It also seems to bind ATP. The polypeptide is DNA replication and repair protein RecF (Thermomicrobium roseum (strain ATCC 27502 / DSM 5159 / P-2)).